The primary structure comprises 168 residues: S-ribosylhomocysteine lyase (168 aa).

Residues His54, His58, and Cys128 each contribute to the Fe cation site.

This sequence belongs to the LuxS family. In terms of assembly, homodimer. Fe cation is required as a cofactor.

The catalysed reaction is S-(5-deoxy-D-ribos-5-yl)-L-homocysteine = (S)-4,5-dihydroxypentane-2,3-dione + L-homocysteine. Involved in the synthesis of autoinducer 2 (AI-2) which is secreted by bacteria and is used to communicate both the cell density and the metabolic potential of the environment. The regulation of gene expression in response to changes in cell density is called quorum sensing. Catalyzes the transformation of S-ribosylhomocysteine (RHC) to homocysteine (HC) and 4,5-dihydroxy-2,3-pentadione (DPD). The sequence is that of S-ribosylhomocysteine lyase from Histophilus somni (strain 2336) (Haemophilus somnus).